The chain runs to 290 residues: Probable aquaporin PIP2-1 (290 aa).

A run of 2 helical transmembrane segments spans residues 43–63 and 80–100; these read AVIAEFIATLLFLYITVATVI and CGGVGVLGIAWAFGGMIFILV. The NPA 1 signature appears at 112–114; sequence NPA. The next 3 helical transmembrane spans lie at 131 to 151, 173 to 193, and 207 to 227; these read ILYIVAQCLGAICGVGLVKAF, GTGLAAEIIGTFVLVYTVFSA, and VLAPLPIGFAVFMVHLATIPI. Positions 233 to 235 match the NPA 2 motif; it reads NPA. Residues 255 to 275 form a helical membrane-spanning segment; sequence IFWVGPFVGAAIAAFYHQYIL.

It belongs to the MIP/aquaporin (TC 1.A.8) family. PIP (TC 1.A.8.11) subfamily. As to expression, expressed in roots, leaves and anthers.

The protein resides in the cell membrane. Aquaporins facilitate the transport of water and small neutral solutes across cell membranes. This chain is Probable aquaporin PIP2-1 (PIP2-1), found in Oryza sativa subsp. japonica (Rice).